The following is a 206-amino-acid chain: MEPVASNIQVLLQAAEFLERREREAEHGYASLCPHHSPGTVCRRRKPPLQAPGALNSGRSVHNELEKRRRAQLKRCLEQLRQQMPLGVDCTRYTTLSLLRRARVHIQKLEEQEQQARRLKEKLRSKQQSLQQQLEQLQGLPGARERERLRADSLDSSGLSSERSDSDQEDLEVDVESLVFGTETELLQSFSAGREHSYSHSTCAWL.

Residues 8-25 (IQVLLQAAEFLERREREA) form an interaction with SIN3A and SIN3B region. Disordered stretches follow at residues 29-66 (YASL…NELE) and 122-171 (KLRS…QEDL). The bHLH domain maps to 57–109 (SGRSVHNELEKRRRAQLKRCLEQLRQQMPLGVDCTRYTTLSLLRRARVHIQKL). Residues 126 to 138 (KQQSLQQQLEQLQ) show a composition bias toward low complexity. Positions 143 to 153 (ARERERLRADS) are enriched in basic and acidic residues.

As to quaternary structure, efficient DNA binding requires dimerization with another bHLH protein. Binds DNA as a heterodimer with MAX. Interacts with SIN3A AND SIN3B. Interacts with RNF17. In terms of tissue distribution, expressed only in the proliferating areas of the testis and thymus.

Its subcellular location is the nucleus. In terms of biological role, transcriptional repressor. Binds with MAX to form a sequence-specific DNA-binding protein complex which recognizes the core sequence 5'-CAC[GA]TG-3'. Antagonizes MYC transcriptional activity by competing for MAX and suppresses MYC dependent cell transformation. This is Max dimerization protein 3 (Mxd3) from Mus musculus (Mouse).